The primary structure comprises 159 residues: Ribosomal RNA large subunit methyltransferase H (159 aa).

Residues L76, G108, and 127 to 132 (FSKMTL) contribute to the S-adenosyl-L-methionine site.

This sequence belongs to the RNA methyltransferase RlmH family. Homodimer.

The protein localises to the cytoplasm. It catalyses the reaction pseudouridine(1915) in 23S rRNA + S-adenosyl-L-methionine = N(3)-methylpseudouridine(1915) in 23S rRNA + S-adenosyl-L-homocysteine + H(+). Functionally, specifically methylates the pseudouridine at position 1915 (m3Psi1915) in 23S rRNA. In Bacillus cereus (strain ATCC 14579 / DSM 31 / CCUG 7414 / JCM 2152 / NBRC 15305 / NCIMB 9373 / NCTC 2599 / NRRL B-3711), this protein is Ribosomal RNA large subunit methyltransferase H.